The chain runs to 220 residues: UPF0502 protein VV2_0756 (220 aa).

It belongs to the UPF0502 family.

This chain is UPF0502 protein VV2_0756, found in Vibrio vulnificus (strain CMCP6).